Reading from the N-terminus, the 506-residue chain is Ecdysteroid UDP-glucosyltransferase (506 aa).

The N-terminal stretch at 1 to 18 (MTAYLIVFCLCCWSAARS) is a signal peptide.

It belongs to the UDP-glycosyltransferase family.

Catalyzes the transfer of glucose from UDP-glucose to ecdysteroids which are insect molting hormones. Expression of egt interferes with normal insect development and block molting. The chain is Ecdysteroid UDP-glucosyltransferase (EGT) from Lymantria dispar multicapsid nuclear polyhedrosis virus (LdMNPV).